A 281-amino-acid chain; its full sequence is MTQKIIRVGNIEIANDKPFVLFGGMNVLESRDLALKVCEEYVRVTEKLGIPYVFKASFDKANRSSVNSYRGPGMEEGLKIFEEIKRTFNVPVITDVHEPYQCEPVAQVCDIIQLPAFLSRQTDLVVAMAKTGAVINIKKAQFLAPHEMKHILAKCVEAGNDQLILCERGSSFGYNNLVVDMLGFGIMKQFEYPVFFDVTHSLQTPGGRADSAGGRRAQVTDLAKAGMSQGLAGLFLEAHPDPDNAKCDGPCALRLDKLEPFLAQLKQLDDLVKSFPTVETA.

Belongs to the KdsA family.

The protein localises to the cytoplasm. The catalysed reaction is D-arabinose 5-phosphate + phosphoenolpyruvate + H2O = 3-deoxy-alpha-D-manno-2-octulosonate-8-phosphate + phosphate. The protein operates within carbohydrate biosynthesis; 3-deoxy-D-manno-octulosonate biosynthesis; 3-deoxy-D-manno-octulosonate from D-ribulose 5-phosphate: step 2/3. It participates in bacterial outer membrane biogenesis; lipopolysaccharide biosynthesis. This chain is 2-dehydro-3-deoxyphosphooctonate aldolase, found in Pseudomonas entomophila (strain L48).